Reading from the N-terminus, the 481-residue chain is NADH-quinone oxidoreductase subunit N (481 aa).

Helical transmembrane passes span 11–31, 38–58, 69–89, 107–127, 128–148, 162–182, 203–223, 237–257, 271–291, 299–319, 327–347, 370–390, 401–421, and 457–477; these read AIPEIWVLTMACVVLLADLFW, LAAVLTVLTLSGAAVLTVFEM, FVLDRFTNVAELFSYLAVLMV, VFVLLLFALLGIMVMVSGGSL, LSVYLGLELLALSQYALVAFY, FVLGALASGLLLYGMSLLYGL, LVLVFAIVFIAAGIAFKLGAA, PTVVTAFLASAPKIGAFALII, WQQIFVALTVVSLVVGNVIAI, MLAYSTIGHVGFMLLGIVAGT, FFYTVVYTLMSLAGFGMILLV, YAFLMMIVMFSMAGVPPTVGF, VAAGYVWLAVVGVLLAVIGAF, and LALLVLGILPGPLMAFCFYAM.

The protein belongs to the complex I subunit 2 family. NDH-1 is composed of 14 different subunits. Subunits NuoA, H, J, K, L, M, N constitute the membrane sector of the complex.

Its subcellular location is the cell inner membrane. The enzyme catalyses a quinone + NADH + 5 H(+)(in) = a quinol + NAD(+) + 4 H(+)(out). NDH-1 shuttles electrons from NADH, via FMN and iron-sulfur (Fe-S) centers, to quinones in the respiratory chain. The immediate electron acceptor for the enzyme in this species is believed to be ubiquinone. Couples the redox reaction to proton translocation (for every two electrons transferred, four hydrogen ions are translocated across the cytoplasmic membrane), and thus conserves the redox energy in a proton gradient. This Acidithiobacillus ferrooxidans (strain ATCC 23270 / DSM 14882 / CIP 104768 / NCIMB 8455) (Ferrobacillus ferrooxidans (strain ATCC 23270)) protein is NADH-quinone oxidoreductase subunit N.